A 199-amino-acid chain; its full sequence is Probable chemoreceptor glutamine deamidase CheD (199 aa).

This sequence belongs to the CheD family.

It carries out the reaction L-glutaminyl-[protein] + H2O = L-glutamyl-[protein] + NH4(+). In terms of biological role, probably deamidates glutamine residues to glutamate on methyl-accepting chemotaxis receptors (MCPs), playing an important role in chemotaxis. The protein is Probable chemoreceptor glutamine deamidase CheD of Cereibacter sphaeroides (strain ATCC 17023 / DSM 158 / JCM 6121 / CCUG 31486 / LMG 2827 / NBRC 12203 / NCIMB 8253 / ATH 2.4.1.) (Rhodobacter sphaeroides).